We begin with the raw amino-acid sequence, 204 residues long: Putative rubrerythrin (204 aa).

One can recognise a Ferritin-like diiron domain in the interval 1–159 (MINNFFVINM…KLLKEVEEGT (159 aa)). The Fe(3+) site is built by glutamate 24, glutamate 57, glutamate 107, glutamate 110, glutamate 141, histidine 144, cysteine 171, cysteine 174, cysteine 187, and cysteine 190. The Rubredoxin-like domain occupies 166 to 204 (PVEWVCRKCGFVHLGKEPPEKCPSCSHPRKYFEVKCEKY).

Homodimer. Possesses two rubredoxin-like centers and two non-sulfur oxo-bridged di-iron centers per dimer. Fe(3+) is required as a cofactor.

It localises to the cytoplasm. May provide oxidative stress protection via catalytic reduction of intracellular hydrogen peroxide. This is Putative rubrerythrin from Methanocaldococcus jannaschii (strain ATCC 43067 / DSM 2661 / JAL-1 / JCM 10045 / NBRC 100440) (Methanococcus jannaschii).